A 561-amino-acid polypeptide reads, in one-letter code: Carbohydrate sulfotransferase 15 (561 aa).

At 1–80 (MRHCINCCVQ…FLRFRKGKRC (80 aa)) the chain is on the cytoplasmic side. The chain crosses the membrane as a helical; Signal-anchor for type II membrane protein span at residues 81–101 (SLVFGLIIMTLVMASYILSGA). Residues 102 to 561 (HQELLISSPF…DDEAFAWKTT (460 aa)) are Lumenal-facing. Residue 263 to 267 (KCGTT) participates in 3'-phosphoadenylyl sulfate binding. Asparagine 364 carries an N-linked (GlcNAc...) asparagine glycan. 3'-phosphoadenylyl sulfate contacts are provided by arginine 392 and serine 400.

This sequence belongs to the sulfotransferase 1 family. In terms of assembly, homodimer; disulfide-linked (Potential). The relevance of homodimerization is however unsure. May interact with phosphorylated proteins in resting B-cells, including HCK. A divalent metal cation serves as cofactor. Glutathione is required as a cofactor. Post-translationally, glycosylated.

The protein resides in the golgi apparatus membrane. The catalysed reaction is dermatan 4'-sulfate + n 3'-phosphoadenylyl sulfate = dermatan 4',6'-bissulfate + n adenosine 3',5'-bisphosphate + n H(+). The enzyme catalyses chondroitin 4'-sulfate + n 3'-phosphoadenylyl sulfate = chondroitin 4',6'-bissulfate + n adenosine 3',5'-bisphosphate + n H(+). Inhibited by phenyl beta-GalNAc(4,6-SO(4)). Its function is as follows. Sulfotransferase that transfers sulfate from 3'-phosphoadenosine 5'-phosphosulfate (PAPS) to the C-6 hydroxyl group of the GalNAc 4-sulfate residue of chondroitin sulfate A and forms chondroitin sulfate E containing GlcA-GalNAc(4,6-SO(4)) repeating units. It also transfers sulfate to a unique non-reducing terminal sequence, GalNAc(4SO4)-GlcA(2SO4)-GalNAc(6SO4), to yield a highly sulfated structure similar to the structure found in thrombomodulin chondroitin sulfate. May also act as a B-cell receptor involved in BCR ligation-mediated early activation that mediate regulatory signals key to B-cell development and/or regulation of B-cell-specific RAG expression; however such results are unclear in vivo. This is Carbohydrate sulfotransferase 15 (Chst15) from Mus musculus (Mouse).